A 249-amino-acid chain; its full sequence is Pyridoxine 5'-phosphate synthase (249 aa).

Residue Asn-7 participates in 3-amino-2-oxopropyl phosphate binding. 1-deoxy-D-xylulose 5-phosphate is bound at residue 9 to 10; that stretch reads DH. Arg-18 is a 3-amino-2-oxopropyl phosphate binding site. His-43 acts as the Proton acceptor in catalysis. Residues Arg-45 and His-50 each contribute to the 1-deoxy-D-xylulose 5-phosphate site. The Proton acceptor role is filled by Glu-70. Thr-100 lines the 1-deoxy-D-xylulose 5-phosphate pocket. The active-site Proton donor is His-190. Residues Gly-191 and 212-213 contribute to the 3-amino-2-oxopropyl phosphate site; that span reads GH.

It belongs to the PNP synthase family. As to quaternary structure, homooctamer; tetramer of dimers.

The protein localises to the cytoplasm. The catalysed reaction is 3-amino-2-oxopropyl phosphate + 1-deoxy-D-xylulose 5-phosphate = pyridoxine 5'-phosphate + phosphate + 2 H2O + H(+). It functions in the pathway cofactor biosynthesis; pyridoxine 5'-phosphate biosynthesis; pyridoxine 5'-phosphate from D-erythrose 4-phosphate: step 5/5. Functionally, catalyzes the complicated ring closure reaction between the two acyclic compounds 1-deoxy-D-xylulose-5-phosphate (DXP) and 3-amino-2-oxopropyl phosphate (1-amino-acetone-3-phosphate or AAP) to form pyridoxine 5'-phosphate (PNP) and inorganic phosphate. This Synechococcus sp. (strain CC9902) protein is Pyridoxine 5'-phosphate synthase.